The following is a 1029-amino-acid chain: Ig-like and fibronectin type-III domain-containing protein 1 (1029 aa).

An N-terminal signal peptide occupies residues 1–22 (MCNVAEDPSSFSTITIATTCRA). Residues 23–918 (EWPKVSPCIA…RRSASKGSSS (896 aa)) are Extracellular-facing. Residues N36, N93, N120, and N165 are each glycosylated (N-linked (GlcNAc...) asparagine). One can recognise a Fibronectin type-III 1 domain in the interval 90 to 181 (APGNVTISEL…TAKLFSTLPT (92 aa)). The region spanning 185 to 227 (PLCTIGEPIYMNDGRVMICDAVNPCPNGFRCTGAGSDLSYCCP) is the WR1 domain. N-linked (GlcNAc...) asparagine glycosylation is found at N257, N374, N409, N442, N482, N507, and N552. Fibronectin type-III domains are found at residues 330 to 417 (AVRN…TKPA) and 427 to 523 (APEK…AQKD). An Ig-like C2-type domain is found at 619–710 (ASVTMKKDKI…SRVEASSEVI (92 aa)). A disulfide bridge links C640 with C693. N753 carries an N-linked (GlcNAc...) asparagine glycan. One can recognise a Fibronectin type-III 4 domain in the interval 817–909 (APSEVSNVRI…SAIPKDSEPR (93 aa)). Residues 919-939 (AFWIVVILVVFGVLIAGLAVL) traverse the membrane as a helical segment. Topologically, residues 940–1029 (SKRRELPYPI…NGMRYAKLET (90 aa)) are cytoplasmic. Residues 988–1021 (SATTGTAAATQSEWQSANLEANSTTDNSHEYRNG) are disordered. Polar residues predominate over residues 998–1013 (QSEWQSANLEANSTTD).

Its subcellular location is the cell membrane. This Caenorhabditis elegans protein is Ig-like and fibronectin type-III domain-containing protein 1.